Consider the following 177-residue polypeptide: Ecotin (177 aa).

The N-terminal stretch at 1–23 (MQASIQNRIFFGLVVLWSTTVLE) is a signal peptide. The cysteines at positions 83 and 122 are disulfide-linked.

It belongs to the protease inhibitor I11 (ecotin) family. In terms of assembly, homodimer.

The protein localises to the periplasm. In terms of biological role, general inhibitor of family S1 serine proteases. The chain is Ecotin from Prochlorococcus marinus (strain MIT 9313).